We begin with the raw amino-acid sequence, 148 residues long: Large ribosomal subunit protein bL9 (148 aa).

It belongs to the bacterial ribosomal protein bL9 family.

Its function is as follows. Binds to the 23S rRNA. This is Large ribosomal subunit protein bL9 from Dechloromonas aromatica (strain RCB).